The primary structure comprises 842 residues: Translation initiation factor IF-2 (842 aa).

2 disordered regions span residues 42-91 and 139-253; these read ETKR…NLSS and LQKQ…NQEP. Composition is skewed to basic and acidic residues over residues 176–190 and 199–214; these read IEKRKIDENQEEERH and SEIRAPKIVKGADERR. The tr-type G domain maps to 340–509; sequence PRPPVVTIMG…LLQAEMLDLK (170 aa). Positions 349-356 are G1; it reads GHVDHGKT. Residue 349 to 356 participates in GTP binding; it reads GHVDHGKT. Positions 374-378 are G2; it reads GITQH. Residues 395–398 form a G3 region; sequence DTPG. GTP is bound by residues 395 to 399 and 449 to 452; these read DTPGH and NKID. Residues 449–452 form a G4 region; it reads NKID. The segment at 485–487 is G5; the sequence is SAK.

The protein belongs to the TRAFAC class translation factor GTPase superfamily. Classic translation factor GTPase family. IF-2 subfamily.

The protein localises to the cytoplasm. Its function is as follows. One of the essential components for the initiation of protein synthesis. Protects formylmethionyl-tRNA from spontaneous hydrolysis and promotes its binding to the 30S ribosomal subunits. Also involved in the hydrolysis of GTP during the formation of the 70S ribosomal complex. The polypeptide is Translation initiation factor IF-2 (Bartonella tribocorum (strain CIP 105476 / IBS 506)).